We begin with the raw amino-acid sequence, 225 residues long: Putative amino-acid transporter YggA (225 aa).

5 helical membrane-spanning segments follow: residues 1–21 (MFATTLQGFTLGLAMIIPIGA), 37–57 (LLTATLCCLCDLVLIGIGVFG), 65–85 (SPIGLALLTWGGVLFLGWFGI), 116–136 (LGVTLLNPHVYLDTLMLLGSF), and 150–170 (AVAMLASLVWFYSLAFGAVVL).

Belongs to the LysE/ArgO transporter (TC 2.A.75) family.

The protein localises to the cell membrane. This Aeromonas hydrophila protein is Putative amino-acid transporter YggA.